The following is a 325-amino-acid chain: GMP reductase (325 aa).

Cys-173 functions as the Thioimidate intermediate in the catalytic mechanism. 202–225 (IIADGGIRSHGDIAKSVRFGATMV) is an NADP(+) binding site.

The protein belongs to the IMPDH/GMPR family. GuaC type 2 subfamily.

The enzyme catalyses IMP + NH4(+) + NADP(+) = GMP + NADPH + 2 H(+). Functionally, catalyzes the irreversible NADPH-dependent deamination of GMP to IMP. It functions in the conversion of nucleobase, nucleoside and nucleotide derivatives of G to A nucleotides, and in maintaining the intracellular balance of A and G nucleotides. This chain is GMP reductase, found in Acidovorax sp. (strain JS42).